Consider the following 405-residue polypeptide: S-adenosylmethionine synthase (405 aa).

His-19 contacts ATP. Asp-21 serves as a coordination point for Mg(2+). Glu-47 is a K(+) binding site. Glu-60 and Gln-103 together coordinate L-methionine. Positions Gln-103–Lys-113 are flexible loop. ATP-binding positions include Asp-179–Lys-181, Arg-246–Phe-247, Asp-255, Arg-261–Lys-262, Ala-278, and Lys-282. An L-methionine-binding site is contributed by Asp-255. Lys-286 lines the L-methionine pocket.

This sequence belongs to the AdoMet synthase family. As to quaternary structure, homotetramer; dimer of dimers. Mg(2+) serves as cofactor. K(+) is required as a cofactor.

The protein resides in the cytoplasm. It carries out the reaction L-methionine + ATP + H2O = S-adenosyl-L-methionine + phosphate + diphosphate. It functions in the pathway amino-acid biosynthesis; S-adenosyl-L-methionine biosynthesis; S-adenosyl-L-methionine from L-methionine: step 1/1. Its function is as follows. Catalyzes the formation of S-adenosylmethionine (AdoMet) from methionine and ATP. The overall synthetic reaction is composed of two sequential steps, AdoMet formation and the subsequent tripolyphosphate hydrolysis which occurs prior to release of AdoMet from the enzyme. This chain is S-adenosylmethionine synthase, found in Shouchella clausii (strain KSM-K16) (Alkalihalobacillus clausii).